Consider the following 153-residue polypeptide: Histone H2B.3 (153 aa).

A compositionally biased stretch (basic and acidic residues) spans 1–28 (MAPKADKKPAAKKPAEEEPATEKAEKAP). Residues 1-60 (MAPKADKKPAAKKPAEEEPATEKAEKAPAGKKPKAEKRLPAGKSAGKEGGEGKKGKKKAK) are disordered. Residues Lys7 and Lys37 each carry the N6-acetyllysine modification. Residue Lys149 forms a Glycyl lysine isopeptide (Lys-Gly) (interchain with G-Cter in ubiquitin) linkage.

The protein belongs to the histone H2B family. As to quaternary structure, the nucleosome is a histone octamer containing two molecules each of H2A, H2B, H3 and H4 assembled in one H3-H4 heterotetramer and two H2A-H2B heterodimers. The octamer wraps approximately 147 bp of DNA. Can be acetylated to form H2BK6ac and H2BK33ac. In terms of processing, monoubiquitinated to form H2BK143ub1; may give a specific tag for epigenetic transcriptional activation.

The protein resides in the nucleus. Its subcellular location is the chromosome. Functionally, core component of nucleosome. Nucleosomes wrap and compact DNA into chromatin, limiting DNA accessibility to the cellular machineries which require DNA as a template. Histones thereby play a central role in transcription regulation, DNA repair, DNA replication and chromosomal stability. DNA accessibility is regulated via a complex set of post-translational modifications of histones, also called histone code, and nucleosome remodeling. In Zea mays (Maize), this protein is Histone H2B.3.